The primary structure comprises 536 residues: Probable E3 ubiquitin-protein ligase ARI13 (536 aa).

Residues Lys83–Met328 form a TRIAD supradomain region. Positions 87, 90, 106, 108, 111, 114, 135, 140, 180, 185, 210, 212, 217, 220, 225, 230, 277, 280, 297, 299, 304, 307, 314, and 324 each coordinate Zn(2+). The segment at Cys87 to Cys140 adopts an RING-type 1 zinc-finger fold. The IBR-type zinc-finger motif lies at Glu158–Cys230. The segment at Cys277 to Cys307 adopts an RING-type 2; atypical zinc-finger fold. The RanBP2-type zinc-finger motif lies at Asp495–Ala526.

This sequence belongs to the RBR family. Ariadne subfamily. Zn(2+) is required as a cofactor.

The catalysed reaction is [E2 ubiquitin-conjugating enzyme]-S-ubiquitinyl-L-cysteine + [acceptor protein]-L-lysine = [E2 ubiquitin-conjugating enzyme]-L-cysteine + [acceptor protein]-N(6)-ubiquitinyl-L-lysine.. Its pathway is protein modification; protein ubiquitination. Might act as an E3 ubiquitin-protein ligase, or as part of E3 complex, which accepts ubiquitin from specific E2 ubiquitin-conjugating enzymes and then transfers it to substrates. The protein is Probable E3 ubiquitin-protein ligase ARI13 (ARI13) of Arabidopsis thaliana (Mouse-ear cress).